We begin with the raw amino-acid sequence, 246 residues long: Probable transcriptional regulatory protein YebC (246 aa).

Residues 1–20 (MAGHSKWANTRHRKAAQDAK) are disordered.

This sequence belongs to the TACO1 family.

The protein resides in the cytoplasm. The protein is Probable transcriptional regulatory protein YebC of Salmonella typhimurium (strain LT2 / SGSC1412 / ATCC 700720).